Here is a 142-residue protein sequence, read N- to C-terminus: Probable pilin MJ0832.1 (142 aa).

A propeptide spanning residues 1–8 (MLKFRKRG) is cleaved from the precursor. The QXSXEXXXL motif lies at 9 to 17 (QISLEFSLL).

In terms of processing, the N-terminus is cleaved by the prepilin peptidase EppA, which recognizes the class III signal sequence.

The protein resides in the secreted. Its subcellular location is the cell surface. It localises to the fimbrium. This Methanocaldococcus jannaschii (strain ATCC 43067 / DSM 2661 / JAL-1 / JCM 10045 / NBRC 100440) (Methanococcus jannaschii) protein is Probable pilin MJ0832.1.